Consider the following 266-residue polypeptide: Glucosamine-6-phosphate deaminase 1 (266 aa).

Catalysis depends on D67, which acts as the Proton acceptor; for enolization step. The active-site For ring-opening step is N136. H138 functions as the Proton acceptor; for ring-opening step in the catalytic mechanism. E143 functions as the For ring-opening step in the catalytic mechanism.

It belongs to the glucosamine/galactosamine-6-phosphate isomerase family. As to quaternary structure, homohexamer.

The protein resides in the cytoplasm. The catalysed reaction is alpha-D-glucosamine 6-phosphate + H2O = beta-D-fructose 6-phosphate + NH4(+). Its function is as follows. Catalyzes the reversible conversion of alpha-D-glucosamine 6-phosphate (GlcN-6P) into beta-D-fructose 6-phosphate (Fru-6P) and ammonium ion, a regulatory reaction step in de novo uridine diphosphate-N-acetyl-alpha-D-glucosamine (UDP-GlcNAc) biosynthesis via hexosamine pathway. The polypeptide is Glucosamine-6-phosphate deaminase 1 (GPI1) (Giardia intestinalis (Giardia lamblia)).